We begin with the raw amino-acid sequence, 533 residues long: Adenosine deaminase (533 aa).

A signal peptide spans 1–19 (MKILLAVVFVLNLTNLAVP).

It belongs to the metallo-dependent hydrolases superfamily. Adenosine and AMP deaminases family. ADGF subfamily. The cofactor is Zn(2+). Post-translationally, proteolytically cleaved by human mast cell tryptase and chymase. Female salivary gland (at protein level).

The protein localises to the secreted. The catalysed reaction is adenosine + H2O + H(+) = inosine + NH4(+). It carries out the reaction 2'-deoxyadenosine + H2O + H(+) = 2'-deoxyinosine + NH4(+). Catalyzes the deamination of adenosine to inosine and deoxyadenosine to deoxyinosine. Induces degranulation of host mast cells, and secretion of tryptase and IL6. Modulates enzymatic activities of human tryptase and chymase. Induces release of cytokines, such as IL1B, IL6, TNF, CCL2, IFN-beta (INFB1) and ISG15, from host monocytes and macrophages. Activates host NF-kappa-B signaling pathway in TAK1/MAP3K7-dependent manner. Its function is as follows. (Microbial infection) Promotes replication of dengue virus type 2 in host cells probably via modulation of cytokine production in host macrophages and monocytes. In Aedes albopictus (Asian tiger mosquito), this protein is Adenosine deaminase.